The primary structure comprises 1192 residues: Probable ATP-dependent RNA helicase kurz (1192 aa).

Residues 170–214 form a disordered region; it reads ELQAKRKNPNVISVEEDDEDSSSSDEDDEEAPAQSAPIAIPTPVS. Residues 183-200 show a composition bias toward acidic residues; it reads VEEDDEDSSSSDEDDEEA. The 167-residue stretch at 270–436 folds into the Helicase ATP-binding domain; the sequence is METINENPIV…TRLFKIPPPL (167 aa). Residue 283 to 290 participates in ATP binding; it reads GETGSGKT. The DEAH box signature appears at 379 to 382; the sequence is DEAH. The tract at residues 504 to 529 is disordered; sequence APTKDVAKNGKVSEEEKEETIDDAAS. Residues 505–517 are compositionally biased toward basic and acidic residues; sequence PTKDVAKNGKVSE. Ser-529 is modified (phosphoserine). Thr-530 carries the post-translational modification Phosphothreonine. Positions 540–746 constitute a Helicase C-terminal domain; the sequence is DMKRVIRNIR…DLMLQMRCMG (207 aa). Residues 567 to 583 are compositionally biased toward basic and acidic residues; the sequence is DDYKLPGDDTEADMHEQ. The tract at residues 567–612 is disordered; sequence DDYKLPGDDTEADMHEQPDEDDEQEGLEEDNDDELGLEDESGMGSG. Over residues 584 to 607 the composition is skewed to acidic residues; it reads PDEDDEQEGLEEDNDDELGLEDES.

This sequence belongs to the DEAD box helicase family. DEAH subfamily.

It carries out the reaction ATP + H2O = ADP + phosphate + H(+). The protein is Probable ATP-dependent RNA helicase kurz (kz) of Drosophila melanogaster (Fruit fly).